We begin with the raw amino-acid sequence, 2489 residues long: Protein YPR117W (2489 aa).

2 helical membrane-spanning segments follow: residues 19–39 (FMLF…WILM) and 128–148 (VLSI…LALT). Asparagine 191, asparagine 210, asparagine 311, asparagine 452, asparagine 468, asparagine 605, asparagine 638, asparagine 663, asparagine 698, asparagine 789, asparagine 835, asparagine 981, asparagine 1255, asparagine 1404, and asparagine 1476 each carry an N-linked (GlcNAc...) asparagine glycan. A coiled-coil region spans residues 1610-1676 (LTQEKLATER…RLHTVNTILS (67 aa)). The disordered stretch occupies residues 1685–1704 (PGGNTDGDSSSSLSDTDVNL). Low complexity predominate over residues 1690–1704 (DGDSSSSLSDTDVNL). N-linked (GlcNAc...) asparagine glycans are attached at residues asparagine 1978 and asparagine 2189. Residues serine 2254 and serine 2278 each carry the phosphoserine modification. Residue asparagine 2279 is glycosylated (N-linked (GlcNAc...) asparagine). Residues 2451–2471 (SSTHSSDIRSINSDETYNEND) are compositionally biased toward polar residues. Residues 2451-2489 (SSTHSSDIRSINSDETYNENDGNGVKPFYPVTSEFSKNK) form a disordered region.

It localises to the cell membrane. The protein localises to the endoplasmic reticulum membrane. It is found in the mitochondrion membrane. Its function is as follows. Tube-forming lipid transport protein which may bind to phosphatidylinositols and may affect phosphatidylinositol-4,5-bisphosphate (PtdIns-4,5-P2) distribution. This Saccharomyces cerevisiae (strain ATCC 204508 / S288c) (Baker's yeast) protein is Protein YPR117W.